A 156-amino-acid polypeptide reads, in one-letter code: Small ribosomal subunit protein uS7c (156 aa).

The protein belongs to the universal ribosomal protein uS7 family. Part of the 30S ribosomal subunit.

It localises to the plastid. The protein resides in the chloroplast. Functionally, one of the primary rRNA binding proteins, it binds directly to 16S rRNA where it nucleates assembly of the head domain of the 30S subunit. The chain is Small ribosomal subunit protein uS7c (rps7) from Cycas revoluta (Sago palm).